A 534-amino-acid chain; its full sequence is Lysophosphatidylcholine acyltransferase 1 (534 aa).

Residues 1–25 are disordered; sequence MRLRGRGPRAAPSSSSGAGDARRLA. The Cytoplasmic portion of the chain corresponds to 1–57; the sequence is MRLRGRGPRAAPSSSSGAGDARRLAPPGRNPFVHELRLSALQKAQVAFMTLTLFPIR. Over residues 8–19 the composition is skewed to low complexity; it reads PRAAPSSSSGAG. The chain crosses the membrane as a helical; Signal-anchor for type II membrane protein span at residues 58 to 78; that stretch reads LLFAAFMMLLAWPFALLASLG. Over 79 to 534 the chain is Lumenal; the sequence is PPDKEPEQPL…GRKNSCKKAD (456 aa). The short motif at 135 to 140 is the HXXXXD motif element; sequence HSSYFD. EF-hand domains follow at residues 379–414 and 451–486; these read PVSD…VCRP and VSEL…YPDY. Positions 392, 394, 398, and 403 each coordinate Ca(2+). Residues 531–534 carry the Di-lysine motif motif; sequence KKAD.

It belongs to the 1-acyl-sn-glycerol-3-phosphate acyltransferase family. As to expression, predominantly expressed in lung where it is enriched in alveolar type II cells. Expressed at lower levels in spleen and brain. Also detected in erythroleukemic cells and reticulocytes. Weakly or not expressed in other tissues.

The protein resides in the endoplasmic reticulum membrane. The protein localises to the golgi apparatus membrane. Its subcellular location is the cell membrane. It localises to the lipid droplet. The enzyme catalyses a 1-acyl-sn-glycero-3-phosphocholine + an acyl-CoA = a 1,2-diacyl-sn-glycero-3-phosphocholine + CoA. It catalyses the reaction a 1-O-alkyl-sn-glycero-3-phosphocholine + acetyl-CoA = a 1-O-alkyl-2-acetyl-sn-glycero-3-phosphocholine + CoA. The catalysed reaction is a 1-acyl-sn-glycero-3-phosphate + an acyl-CoA = a 1,2-diacyl-sn-glycero-3-phosphate + CoA. It carries out the reaction a 1-O-(1Z-alkenyl)-sn-glycero-3-phosphocholine + an acyl-CoA = a 1-O-(1Z-alkenyl)-2-acyl-sn-glycero-3-phosphocholine + CoA. The enzyme catalyses 1-acyl-sn-glycero-3-phospho-(1'-sn-glycerol) + an acyl-CoA = a 1,2-diacyl-sn-glycero-3-phospho-(1'-sn-glycerol) + CoA. It catalyses the reaction 1-hexadecanoyl-sn-glycero-3-phosphocholine + hexadecanoyl-CoA = 1,2-dihexadecanoyl-sn-glycero-3-phosphocholine + CoA. The catalysed reaction is 1-O-hexadecyl-sn-glycero-3-phosphocholine + hexadecanoyl-CoA = 1-O-hexadecyl-2-hexadecanoyl-sn-glycero-3-phosphocholine + CoA. It carries out the reaction a 1-O-(1Z-alkenyl)-sn-glycero-3-phosphocholine + hexadecanoyl-CoA = 1-O-(1Z)-alkenyl-2-hexadecanoyl-sn-glycero-3-phosphocholine + CoA. The enzyme catalyses 1-hexadecanoyl-sn-glycero-3-phospho-(1'-sn-glycerol) + hexadecanoyl-CoA = 1,2-dihexadecanoyl-sn-glycero-3-phospho-(1'-sn-glycerol) + CoA. It catalyses the reaction 1-dodecanoyl-sn-glycero-3-phosphocholine + hexadecanoyl-CoA = 1-dodecanoyl-2-hexadecanoyl-sn-glycero-3-phosphocholine + CoA. The catalysed reaction is 1-tetradecanoyl-sn-glycero-3-phosphocholine + hexadecanoyl-CoA = 1-tetradecanoyl-2-hexadecanoyl-sn-glycero-3-phosphocholine + CoA. It carries out the reaction 1-O-octadecyl-sn-glycero-3-phosphocholine + hexadecanoyl-CoA = 1-O-octadecyl-2-hexadecanoyl-sn-glycero-3-phosphocholine + CoA. The enzyme catalyses 1-octadecanoyl-sn-glycero-3-phosphocholine + hexadecanoyl-CoA = 1-octadecanoyl-2-hexadecanoyl-sn-glycero-3-phosphocholine + CoA. It catalyses the reaction 1-(9Z-octadecenoyl)-sn-glycero-3-phosphocholine + hexadecanoyl-CoA = 1-(9Z-octadecenoyl)-2-hexadecanoyl-sn-glycero-3-phosphocholine + CoA. The catalysed reaction is 1-eicosanoyl-sn-glycero-3-phosphocholine + hexadecanoyl-CoA = 1-eicosanoyl-2-hexadecanoyl-sn-glycero-3-phosphocholine + CoA. It carries out the reaction hexanoyl-CoA + 1-hexadecanoyl-sn-glycero-3-phosphocholine = 1-hexadecanoyl-2-hexanoyl-sn-glycero-3-phosphocholine + CoA. The enzyme catalyses octanoyl-CoA + 1-hexadecanoyl-sn-glycero-3-phosphocholine = 1-hexadecanoyl-2-octanoyl-sn-glycero-3-phosphocholine + CoA. It catalyses the reaction decanoyl-CoA + 1-hexadecanoyl-sn-glycero-3-phosphocholine = 1-hexadecanoyl-2-decanoyl-sn-glycero-3-phosphocholine + CoA. The catalysed reaction is dodecanoyl-CoA + 1-hexadecanoyl-sn-glycero-3-phosphocholine = 1-hexadecanoyl-2-dodecanoyl-sn-glycero-3-phosphocholine + CoA. It carries out the reaction tetradecanoyl-CoA + 1-hexadecanoyl-sn-glycero-3-phosphocholine = 1-hexadecanoyl-2-tetradecanoyl-sn-glycero-3-phosphocholine + CoA. The enzyme catalyses 1-hexadecanoyl-sn-glycero-3-phosphocholine + (9Z)-octadecenoyl-CoA = 1-hexadecanoyl-2-(9Z-octadecenoyl)-sn-glycero-3-phosphocholine + CoA. It catalyses the reaction (9Z,12Z)-octadecadienoyl-CoA + 1-hexadecanoyl-sn-glycero-3-phosphocholine = 1-hexadecanoyl-2-(9Z,12Z-octadecadienoyl)-sn-glycero-3-phosphocholine + CoA. The catalysed reaction is (4Z,7Z,10Z,13Z,16Z,19Z)-docosahexaenoyl-CoA + 1-hexadecanoyl-sn-glycero-3-phosphocholine = 1-hexadecanoyl-2-(4Z,7Z,10Z,13Z,16Z,19Z-docosahexaenoyl)-sn-glycero-3-phosphocholine + CoA. It carries out the reaction 1-hexadecanoyl-sn-glycero-3-phosphocholine + acetyl-CoA = 1-hexadecanoyl-2-acetyl-sn-glycero-3-phosphocholine + CoA. The enzyme catalyses eicosanoyl-CoA + 1-hexadecanoyl-sn-glycero-3-phosphocholine = 1-hexadecanoyl-2-eicosanoyl-sn-glycero-3-phosphocholine + CoA. It catalyses the reaction 1-O-hexadecyl-sn-glycero-3-phosphocholine + acetyl-CoA = 1-O-hexadecyl-2-acetyl-sn-glycero-3-phosphocholine + CoA. The catalysed reaction is a 1-acyl-sn-glycero-3-phosphocholine + hexadecanoyl-CoA = 1-acyl-2-hexadecanoyl-sn-glycero-3-phosphocholine + CoA. It carries out the reaction a 1-acyl-sn-glycero-3-phosphate + hexadecanoyl-CoA = 1-acyl-2-hexadecanoyl-sn-glycero-3-phosphate + CoA. The enzyme catalyses 1-acyl-sn-glycero-3-phospho-(1'-sn-glycerol) + hexadecanoyl-CoA = 1-acyl-2-hexadecanoyl-sn-glycero-3-phospho-(1'-sn-glycerol) + CoA. It participates in lipid metabolism; phospholipid metabolism. With respect to regulation, not activated by inflammatory stimulation. Inhibited by Cu(2+), Fe(2+), Ca(2+) and Mg(2+). Activity is not affected by Co(2+) or Mn(2+). Functionally, exhibits both acyltransferase and acetyltransferase activities. Activity is calcium-independent. Catalyzes the conversion of lysophosphatidylcholine (1-acyl-sn-glycero-3-phosphocholine or LPC) into phosphatidylcholine (1,2-diacyl-sn-glycero-3-phosphocholine or PC). Catalyzes the conversion 1-acyl-sn-glycerol-3-phosphate (lysophosphatidic acid or LPA) into 1,2-diacyl-sn-glycerol-3-phosphate (phosphatidic acid or PA) by incorporating an acyl moiety at the sn-2 position of the glycerol backbone. Displays a clear preference for saturated fatty acyl-CoAs, and 1-myristoyl or 1-palmitoyl LPC as acyl donors and acceptors, respectively. Involved in platelet-activating factor (PAF) biosynthesis by catalyzing the conversion of the PAF precursor, 1-O-alkyl-sn-glycero-3-phosphocholine (lyso-PAF) into 1-O-alkyl-2-acetyl-sn-glycero-3-phosphocholine (PAF). May synthesize phosphatidylcholine in pulmonary surfactant, thereby playing a pivotal role in respiratory physiology. Involved in the regulation of lipid droplet number and size. In Mus musculus (Mouse), this protein is Lysophosphatidylcholine acyltransferase 1 (Lpcat1).